Here is a 401-residue protein sequence, read N- to C-terminus: Decapping and exoribonuclease protein (401 aa).

The tract at residues 1–27 (MEGNKSMQREKIDRPMKRGPEQNSLSP) is disordered. Positions 7 to 20 (MQREKIDRPMKRGP) are enriched in basic and acidic residues. Residues Arg69, Glu114, and 149 to 151 (WRG) contribute to the substrate site. Glu210 is a Mg(2+) binding site. Cys235 and Glu252 together coordinate substrate. Residues Glu252, Asp254, Glu271, and Leu272 each coordinate Mg(2+). Substrate contacts are provided by Lys273 and Gln298.

The protein belongs to the DXO/Dom3Z family. Requires Mg(2+) as cofactor.

Its subcellular location is the nucleus. It carries out the reaction a 5'-end triphospho-ribonucleoside in mRNA + H2O = a 5'-end phospho-ribonucleoside in mRNA + diphosphate + H(+). The catalysed reaction is a 5'-end NAD(+)-phospho-ribonucleoside in mRNA + H2O = a 5'-end phospho-ribonucleoside in mRNA + NAD(+) + H(+). It catalyses the reaction a 5'-end NAD(+)-phospho-ribonucleoside in snoRNA + H2O = a 5'-end phospho-ribonucleoside in snoRNA + NAD(+) + H(+). The enzyme catalyses a 5'-end (N(7)-methyl 5'-triphosphoguanosine)-ribonucleoside-ribonucleotide in mRNA + H2O = a (N(7)-methyl 5'-triphosphoguanosine)-nucleoside + a 5'-end phospho-ribonucleoside in mRNA + H(+). It carries out the reaction a 5'-end FAD-phospho-ribonucleoside in mRNA + H2O = a 5'-end phospho-ribonucleoside in mRNA + FAD + H(+). The catalysed reaction is a 5'-end CoA-ribonucleoside in mRNA + H2O = 3'-dephospho-CoA + a 5'-end phospho-ribonucleoside in mRNA + H(+). Decapping enzyme for NAD-capped RNAs: specifically hydrolyzes the nicotinamide adenine dinucleotide (NAD) cap from a subset of RNAs by removing the entire NAD moiety from the 5'-end of an NAD-capped RNA. The NAD-cap is present at the 5'-end of some RNAs and snoRNAs. In contrast to the canonical 5'-end N7 methylguanosine (m7G) cap, the NAD cap promotes mRNA decay. Also acts as a non-canonical decapping enzyme that removes the entire cap structure of m7G capped or incompletely capped RNAs and mediates their subsequent degradation. Specifically degrades pre-mRNAs with a defective 5'-end m7G cap and is part of a pre-mRNA capping quality control. Has decapping activity toward incomplete 5'-end m7G cap mRNAs such as unmethylated 5'-end-capped RNA (cap0), while it has no activity toward 2'-O-ribose methylated m7G cap (cap1). Also has 5'-3' exoribonuclease activities: The 5'-end monophosphate RNA is then degraded by the 5'-3' exoribonuclease activity, enabling this enzyme to decap and degrade incompletely capped mRNAs. Also possesses RNA 5'-pyrophosphohydrolase activity by hydrolyzing the 5'-end triphosphate to release pyrophosphates. Exhibits decapping activity towards FAD-capped RNAs. Exhibits decapping activity towards dpCoA-capped RNAs in vitro. This is Decapping and exoribonuclease protein from Xenopus laevis (African clawed frog).